The sequence spans 170 residues: Crossover junction endodeoxyribonuclease RuvC (170 aa).

Residues Asp-8, Glu-67, and Asp-139 contribute to the active site. Mg(2+) is bound by residues Asp-8, Glu-67, and Asp-139.

This sequence belongs to the RuvC family. Homodimer which binds Holliday junction (HJ) DNA. The HJ becomes 2-fold symmetrical on binding to RuvC with unstacked arms; it has a different conformation from HJ DNA in complex with RuvA. In the full resolvosome a probable DNA-RuvA(4)-RuvB(12)-RuvC(2) complex forms which resolves the HJ. Mg(2+) serves as cofactor.

The protein resides in the cytoplasm. The enzyme catalyses Endonucleolytic cleavage at a junction such as a reciprocal single-stranded crossover between two homologous DNA duplexes (Holliday junction).. Its function is as follows. The RuvA-RuvB-RuvC complex processes Holliday junction (HJ) DNA during genetic recombination and DNA repair. Endonuclease that resolves HJ intermediates. Cleaves cruciform DNA by making single-stranded nicks across the HJ at symmetrical positions within the homologous arms, yielding a 5'-phosphate and a 3'-hydroxyl group; requires a central core of homology in the junction. The consensus cleavage sequence is 5'-(A/T)TT(C/G)-3'. Cleavage occurs on the 3'-side of the TT dinucleotide at the point of strand exchange. HJ branch migration catalyzed by RuvA-RuvB allows RuvC to scan DNA until it finds its consensus sequence, where it cleaves and resolves the cruciform DNA. The sequence is that of Crossover junction endodeoxyribonuclease RuvC from Pectobacterium atrosepticum (strain SCRI 1043 / ATCC BAA-672) (Erwinia carotovora subsp. atroseptica).